The primary structure comprises 430 residues: Adenylosuccinate synthetase (430 aa).

GTP-binding positions include 12 to 18 (GDEGKGK) and 40 to 42 (GHT). The active-site Proton acceptor is the Asp13. Residues Asp13 and Gly40 each coordinate Mg(2+). Residues 13–16 (DEGK), 38–41 (NAGH), Thr130, Arg144, Gln224, Thr239, and Arg303 contribute to the IMP site. The active-site Proton donor is the His41. A substrate-binding site is contributed by 299–305 (ATTGRPR). Residues Arg305, 331–333 (KLD), and 413–415 (SVG) each bind GTP.

This sequence belongs to the adenylosuccinate synthetase family. As to quaternary structure, homodimer. Requires Mg(2+) as cofactor.

Its subcellular location is the cytoplasm. The enzyme catalyses IMP + L-aspartate + GTP = N(6)-(1,2-dicarboxyethyl)-AMP + GDP + phosphate + 2 H(+). It participates in purine metabolism; AMP biosynthesis via de novo pathway; AMP from IMP: step 1/2. Plays an important role in the de novo pathway of purine nucleotide biosynthesis. Catalyzes the first committed step in the biosynthesis of AMP from IMP. The sequence is that of Adenylosuccinate synthetase from Trichlorobacter lovleyi (strain ATCC BAA-1151 / DSM 17278 / SZ) (Geobacter lovleyi).